The chain runs to 539 residues: MEDSLFSVDKAGPGKDASAASADCNHMVAEDGIITEQHKEIPLVALKVPDGHAPIDECELLNSDDQLPKGSQNQTNICMRIRAFACPPQGCFSLAITNVTMVILIWAVVWSITGPECLPGGNLFGILALLFSAALGGKLISLIKIPSLPPLPPLLGMLLAGFLIRNIPVITDQVQIHHKWSAALRNIALAIILVRAGLGLDPKALRKLKAVCLRLSFGPCVVESCTAAVVSHFIMGFPLTWGFMLGFVLGAVSPAVVVPSMLILQKEGFGVDKGIPTLLMAAGSFDDVLAITGFNTCLGMAFSSGSTLNTIVRGVLEVVVGIAAGLLFGFFLHYFPSKDQENLKGKRSYLILALSVFAVFGSLYFGFPGSGGLCTLVMAFLAGIGWSTDKTVVEDIIAVSWDIFQPLLFGLIGAEISVASLKPETVGLCTATLIIALIIRICISFLMVCFSGFSLKEKIFISLAWMPKATVQAAIGSVALDTARTLENKQFEDYGMDVLTVAFLGILVTAPIGALVIGLTGPKMLEKSESRTVTEEGSV.

Over 1 to 94 the chain is Cytoplasmic; sequence MEDSLFSVDK…ACPPQGCFSL (94 aa). The chain crosses the membrane as a helical span at residues 95–112; that stretch reads AITNVTMVILIWAVVWSI. Residues 113-121 are Extracellular-facing; sequence TGPECLPGG. Residues 122-141 form a helical membrane-spanning segment; that stretch reads NLFGILALLFSAALGGKLIS. The Cytoplasmic portion of the chain corresponds to 142–152; it reads LIKIPSLPPLP. Residues 153 to 169 traverse the membrane as a helical segment; it reads PLLGMLLAGFLIRNIPV. The Extracellular segment spans residues 170–179; that stretch reads ITDQVQIHHK. A helical transmembrane segment spans residues 180–197; that stretch reads WSAALRNIALAIILVRAG. The Cytoplasmic portion of the chain corresponds to 198-208; the sequence is LGLDPKALRKL. A helical transmembrane segment spans residues 209–235; sequence KAVCLRLSFGPCVVESCTAAVVSHFIM. The Extracellular segment spans residues 236–241; the sequence is GFPLTW. Residues 242 to 250 form a helical membrane-spanning segment; it reads GFMLGFVLG. The Cytoplasmic segment spans residues 251 to 278; sequence AVSPAVVVPSMLILQKEGFGVDKGIPTL. Residues valine 252, glycine 283, aspartate 286, and aspartate 287 each coordinate Na(+). A helical transmembrane segment spans residues 279–298; it reads LMAAGSFDDVLAITGFNTCL. Residues 299 to 308 are Extracellular-facing; the sequence is GMAFSSGSTL. A helical transmembrane segment spans residues 309–332; sequence NTIVRGVLEVVVGIAAGLLFGFFL. Residues 333-347 are Cytoplasmic-facing; sequence HYFPSKDQENLKGKR. A helical transmembrane segment spans residues 348 to 365; it reads SYLILALSVFAVFGSLYF. The Extracellular segment spans residues 366–369; sequence GFPG. A helical membrane pass occupies residues 370–381; it reads SGGLCTLVMAFL. The Cytoplasmic portion of the chain corresponds to 382 to 398; the sequence is AGIGWSTDKTVVEDIIA. Residues 399–419 form a helical membrane-spanning segment; sequence VSWDIFQPLLFGLIGAEISVA. Residues 420 to 425 lie on the Extracellular side of the membrane; that stretch reads SLKPET. Residues 426 to 448 form a helical membrane-spanning segment; it reads VGLCTATLIIALIIRICISFLMV. The Cytoplasmic portion of the chain corresponds to 449 to 469; sequence CFSGFSLKEKIFISLAWMPKA. Residues 470–481 traverse the membrane as a helical segment; it reads TVQAAIGSVALD. Topologically, residues 482-494 are extracellular; that stretch reads TARTLENKQFEDY. Residues 495–517 traverse the membrane as a helical segment; that stretch reads GMDVLTVAFLGILVTAPIGALVI. Topologically, residues 518–539 are cytoplasmic; that stretch reads GLTGPKMLEKSESRTVTEEGSV.

This sequence belongs to the monovalent cation:proton antiporter 1 (CPA1) transporter (TC 2.A.36) family. In terms of assembly, homodimer; dimerization is essential for SLC9B2 activity. Lipids seem to play a role in the stabilization of the dimerization subdomain.

The protein resides in the cell membrane. It localises to the mitochondrion membrane. Its subcellular location is the endosome membrane. The protein localises to the recycling endosome membrane. It is found in the cytoplasmic vesicle. The protein resides in the secretory vesicle. It localises to the synaptic vesicle membrane. Its subcellular location is the basolateral cell membrane. The protein localises to the apical cell membrane. The enzyme catalyses Li(+)(out) + H(+)(in) = Li(+)(in) + H(+)(out). It catalyses the reaction Li(+)(in) + Na(+)(out) = Li(+)(out) + Na(+)(in). It carries out the reaction Na(+)(in) + H(+)(out) = Na(+)(out) + H(+)(in). Its activity is regulated as follows. Allosterically inhibited by the N-terminal domain. Inhibited by phloretin. Functionally, electroneutral Na(+) Li(+)/H(+) antiporter that extrudes Na(+) or Li(+) in exchange for external protons across the membrane. Uses the proton gradient/membrane potential to extrude sodium. Contributes to the regulation of intracellular pH and sodium homeostasis. Also able to mediate Na(+)/Li(+) antiporter activity in kidney. In Xenopus tropicalis (Western clawed frog), this protein is Sodium/hydrogen exchanger 9B2 (slc9b2).